Here is a 356-residue protein sequence, read N- to C-terminus: Heme A synthase (356 aa).

The next 5 membrane-spanning stretches (helical) occupy residues 24–44 (IAIW…VGGV), 106–126 (FHRL…VYFM), 139–159 (LLGI…MVMS), 174–194 (AHLG…TGLI), and 214–234 (AWML…VAGI). A heme-binding site is contributed by His276. A run of 3 helical transmembrane segments spans residues 278–298 (LIAW…KQLS), 309–329 (LLLL…LLSV), and 331–351 (LTFA…ALWV). His337 serves as a coordination point for heme.

The protein belongs to the COX15/CtaA family. Type 2 subfamily. Interacts with CtaB. The cofactor is heme b.

Its subcellular location is the cell membrane. The catalysed reaction is Fe(II)-heme o + 2 A + H2O = Fe(II)-heme a + 2 AH2. It functions in the pathway porphyrin-containing compound metabolism; heme A biosynthesis; heme A from heme O: step 1/1. In terms of biological role, catalyzes the conversion of heme O to heme A by two successive hydroxylations of the methyl group at C8. The first hydroxylation forms heme I, the second hydroxylation results in an unstable dihydroxymethyl group, which spontaneously dehydrates, resulting in the formyl group of heme A. The chain is Heme A synthase from Nitrosomonas eutropha (strain DSM 101675 / C91 / Nm57).